The chain runs to 620 residues: Bicaudal D-related protein homolog (620 aa).

Residues Asn-23 to Asn-41 show a composition bias toward low complexity. The segment at Asn-23–Ser-53 is disordered. 2 coiled-coil regions span residues Ala-120–Arg-331 and Val-461–Glu-575. Basic and acidic residues-rich tracts occupy residues Lys-493 to Leu-503 and Arg-509 to Thr-528. A disordered region spans residues Lys-493–Thr-528.

Belongs to the BICDR family. As to quaternary structure, may homodimerize but does not interact with BicD. May interact with eEF1gamma; The interaction is probably indirect.

Its function is as follows. Functions redundantly with BicD. Involved in formation and/or development of mechanosensory organs during metamorphosis. During macrochaetae development, together with BicD, involved in Rab 6 and Spn-F stability and distribution and actin cytoskeleton organization. The polypeptide is Bicaudal D-related protein homolog (Drosophila melanogaster (Fruit fly)).